Consider the following 347-residue polypeptide: 3-isopropylmalate dehydrogenase (347 aa).

Substrate is bound by residues Arg-94, Arg-104, Arg-128, and Asp-219. Mg(2+) is bound by residues Asp-219, Asp-243, and Asp-247. 279-291 (GSAPDIAGQGKAD) contributes to the NAD(+) binding site.

Belongs to the isocitrate and isopropylmalate dehydrogenases family. LeuB type 2 subfamily. In terms of assembly, homodimer. Requires Mg(2+) as cofactor. Mn(2+) serves as cofactor.

Its subcellular location is the cytoplasm. It catalyses the reaction (2R,3S)-3-isopropylmalate + NAD(+) = 4-methyl-2-oxopentanoate + CO2 + NADH. It participates in amino-acid biosynthesis; L-leucine biosynthesis; L-leucine from 3-methyl-2-oxobutanoate: step 3/4. Catalyzes the oxidation of 3-carboxy-2-hydroxy-4-methylpentanoate (3-isopropylmalate) to 3-carboxy-4-methyl-2-oxopentanoate. The product decarboxylates to 4-methyl-2 oxopentanoate. The polypeptide is 3-isopropylmalate dehydrogenase (Streptomyces avermitilis (strain ATCC 31267 / DSM 46492 / JCM 5070 / NBRC 14893 / NCIMB 12804 / NRRL 8165 / MA-4680)).